Reading from the N-terminus, the 437-residue chain is Transcription factor AP-2-alpha (437 aa).

K10 participates in a covalent cross-link: Glycyl lysine isopeptide (Lys-Gly) (interchain with G-Cter in SUMO); alternate. Residue K10 forms a Glycyl lysine isopeptide (Lys-Gly) (interchain with G-Cter in SUMO2); alternate linkage. The segment at 14–107 (CEDRHDGTSN…GQRQSQESGL (94 aa)) is disordered. Residues 57–62 (YFPPPY) carry the PPxY motif motif. Low complexity-rich tracts occupy residues 65–74 (IYPQSQDPYS) and 88–101 (QPQPQHPGWPGQRQ). Residues K177 and K184 each participate in a glycyl lysine isopeptide (Lys-Gly) (interchain with G-Cter in SUMO2) cross-link. S239 is subject to Phosphoserine; by PKA. Positions 280-410 (RRKAANVTLL…YLTEALKAMD (131 aa)) are H-S-H (helix-span-helix), dimerization. Residues 414–427 (LSNNPNSHTDNSAK) are compositionally biased toward polar residues. The tract at residues 414–437 (LSNNPNSHTDNSAKSSDKEEKHRK) is disordered. Over residues 428-437 (SSDKEEKHRK) the composition is skewed to basic and acidic residues.

This sequence belongs to the AP-2 family. Binds DNA as a dimer. Can form homodimers or heterodimers with other AP-2 family members. Interacts with WWOX. Interacts with UBE2I. Interacts with RALBP1 in a complex also containing EPN1 and NUMB during interphase and mitosis. Interacts with CITED4. Interacts with KCTD1; this interaction represses transcription activation. Interacts (via C-terminus) with CITED2 (via C-terminus); the interaction stimulates TFAP2A-transcriptional activation. Interacts (via N-terminus) with EP300 (via N-terminus); the interaction requires CITED2. Interacts with KCTD15; this interaction inhibits TFAP2A transcriptional activation. In terms of processing, sumoylated on Lys-10; which inhibits transcriptional activity.

The protein resides in the nucleus. In terms of biological role, sequence-specific DNA-binding protein that interacts with inducible viral and cellular enhancer elements to regulate transcription of selected genes. AP-2 factors bind to the consensus sequence 5'-GCCNNNGGC-3' and activate genes involved in a large spectrum of important biological functions including proper eye, face, body wall, limb and neural tube development. They also suppress a number of genes including MCAM/MUC18, C/EBP alpha and MYC. AP-2-alpha is the only AP-2 protein required for early morphogenesis of the lens vesicle. Together with the CITED2 coactivator, stimulates the PITX2 P1 promoter transcription activation. Associates with chromatin to the PITX2 P1 promoter region. The sequence is that of Transcription factor AP-2-alpha (Tfap2a) from Mus musculus (Mouse).